The chain runs to 315 residues: L-lactate dehydrogenase (315 aa).

Residues valine 17, aspartate 38, lysine 43, tyrosine 69, and 83–84 (GA) each bind NAD(+). Substrate is bound by residues glutamine 86, arginine 92, and 124–127 (NPVD). Residues 122–124 (ATN) and serine 147 each bind NAD(+). Substrate is bound at residue 152-155 (DTAR). Beta-D-fructose 1,6-bisphosphate-binding residues include arginine 157 and histidine 172. Residue histidine 179 is the Proton acceptor of the active site. Tyrosine 224 is subject to Phosphotyrosine. Substrate is bound at residue threonine 233.

Belongs to the LDH/MDH superfamily. LDH family. In terms of assembly, homotetramer.

It is found in the cytoplasm. It catalyses the reaction (S)-lactate + NAD(+) = pyruvate + NADH + H(+). It participates in fermentation; pyruvate fermentation to lactate; (S)-lactate from pyruvate: step 1/1. Allosterically activated by fructose 1,6-bisphosphate (FBP). Its function is as follows. Catalyzes the conversion of lactate to pyruvate. The chain is L-lactate dehydrogenase from Bacillus pumilus (strain SAFR-032).